Here is a 210-residue protein sequence, read N- to C-terminus: Protein-L-isoaspartate O-methyltransferase (210 aa).

The active site involves S59.

The protein belongs to the methyltransferase superfamily. L-isoaspartyl/D-aspartyl protein methyltransferase family.

It is found in the cytoplasm. The enzyme catalyses [protein]-L-isoaspartate + S-adenosyl-L-methionine = [protein]-L-isoaspartate alpha-methyl ester + S-adenosyl-L-homocysteine. Its function is as follows. Catalyzes the methyl esterification of L-isoaspartyl residues in peptides and proteins that result from spontaneous decomposition of normal L-aspartyl and L-asparaginyl residues. It plays a role in the repair and/or degradation of damaged proteins. The chain is Protein-L-isoaspartate O-methyltransferase from Nitratidesulfovibrio vulgaris (strain ATCC 29579 / DSM 644 / CCUG 34227 / NCIMB 8303 / VKM B-1760 / Hildenborough) (Desulfovibrio vulgaris).